A 55-amino-acid chain; its full sequence is MRKWQCVVCGFIYDEALGLPEEGIPAGTRWEDIPADWVCPDCGVGKIDFEMIEIA.

In terms of domain architecture, Rubredoxin-like spans 1–54 (MRKWQCVVCGFIYDEALGLPEEGIPAGTRWEDIPADWVCPDCGVGKIDFEMIEI). Fe cation contacts are provided by Cys-6, Cys-9, Cys-39, and Cys-42.

This sequence belongs to the rubredoxin family. It depends on Fe(3+) as a cofactor.

It localises to the cytoplasm. It participates in hydrocarbon metabolism; alkane degradation. Functionally, involved in the hydrocarbon hydroxylating system, which transfers electrons from NADH to rubredoxin reductase and then through rubredoxin to alkane 1 monooxygenase. The sequence is that of Rubredoxin-2 (rubA2) from Pseudomonas aeruginosa (strain ATCC 15692 / DSM 22644 / CIP 104116 / JCM 14847 / LMG 12228 / 1C / PRS 101 / PAO1).